The chain runs to 450 residues: Protein tweety homolog 1 (450 aa).

Over 1–43 (MGAPPGYRPSAWVHLLHQLPRADFQLRPVPSGFAPRDQEYQQA) the chain is Extracellular. Residues 44–64 (LLLVAALAGLGLGLSLIFIAV) traverse the membrane as a helical segment. At 65–88 (YLIRFCCCRPPEPPGAKSPPPGGG) the chain is on the cytoplasmic side. Residues 89 to 109 (CVTWSCIAALLVGCAGIGIGF) form a helical membrane-spanning segment. At 110 to 214 (YGNSETSDGV…DVTFVEEYRW (105 aa)) the chain is on the extracellular side. N-linked (GlcNAc...) asparagine glycosylation occurs at N130. A helical transmembrane segment spans residues 215 to 235 (LAYVLLLLLVLLVCLFTLLGL). Over 236-240 (AKQSK) the chain is Cytoplasmic. A helical transmembrane segment spans residues 241–261 (WLVVVMTAMSLLVLVLSWGSM). Residues 262–390 (GLEAATAVGL…LRGLCEDALE (129 aa)) are Extracellular-facing. 2 disulfide bridges follow: C275-C385 and C303-C370. N284 and N355 each carry an N-linked (GlcNAc...) asparagine glycan. A helical membrane pass occupies residues 391 to 411 (GLLFLMLFSLLSAGALATTLC). The Cytoplasmic segment spans residues 412 to 450 (SLPRAWALFPPSDDYDDTDDDDPFNPQESKRFVQWQSSI). The segment at 428–450 (DTDDDDPFNPQESKRFVQWQSSI) is disordered. The residue at position 440 (S440) is a Phosphoserine.

This sequence belongs to the tweety family. Homotetramer; disulfide-linked. Homodimer. In terms of processing, N-glycosylated. Contains high-mannose, hybrid and complex oligosaccharides.

Its subcellular location is the cell membrane. It catalyses the reaction chloride(in) = chloride(out). The catalysed reaction is L-glutamate(out) = L-glutamate(in). Calcium-independent, swelling-dependent volume-regulated anion channel (VRAC-swell) which plays a pivotal role in the process of regulatory volume decrease (RVD) in the brain through the efflux of anions like chloride and organic osmolytes like glutamate. The protein is Protein tweety homolog 1 (Ttyh1) of Rattus norvegicus (Rat).